We begin with the raw amino-acid sequence, 94 residues long: Small ubiquitin-related modifier 3-like (94 aa).

Residue Lys-11 forms a Glycyl lysine isopeptide (Lys-Gly) (interchain with G-Cter in SUMO) linkage. One can recognise a Ubiquitin-like domain in the interval 15–92 (DHINLKVAGQ…IDVFQQQTGG (78 aa)). Gly-92 is covalently cross-linked (Glycyl lysine isopeptide (Gly-Lys) (interchain with K-? in acceptor proteins)). Residues 93–94 (SC) constitute a propeptide that is removed on maturation.

It belongs to the ubiquitin family. SUMO subfamily. Interacts with sae2 and ube2i. Covalently attached to a number of proteins. Polymeric chains can be formed through Lys-11 cross-linking. In terms of processing, cleavage of precursor form by a sentrin-specific protease is necessary for function.

It is found in the cytoplasm. Its subcellular location is the nucleus. It localises to the PML body. Functionally, ubiquitin-like protein which can be covalently attached to target lysines either as a monomer or as a lysine-linked polymer. Does not seem to be involved in protein degradation and may function as an antagonist of ubiquitin in the degradation process. Plays a role in a number of cellular processes such as nuclear transport, DNA replication and repair, mitosis and signal transduction. Covalent attachment to its substrates requires prior activation by the E1 complex sae1-sae2 and linkage to the E2 enzyme ube2i. This chain is Small ubiquitin-related modifier 3-like (sumo3l), found in Danio rerio (Zebrafish).